A 188-amino-acid polypeptide reads, in one-letter code: Ribosome-recycling factor (188 aa).

This sequence belongs to the RRF family.

The protein resides in the cytoplasm. In terms of biological role, responsible for the release of ribosomes from messenger RNA at the termination of protein biosynthesis. May increase the efficiency of translation by recycling ribosomes from one round of translation to another. The sequence is that of Ribosome-recycling factor from Acidiphilium cryptum (strain JF-5).